Here is a 27-residue protein sequence, read N- to C-terminus: Antimicrobial peptide 1 (27 aa).

In terms of tissue distribution, expressed by the skin glands.

It is found in the secreted. Its function is as follows. Has very weak antimicrobial activity against Gram-positive bacterium S.aureus and Gram-negative bacterium E.coli and stronger activity against yeast C.albicans. Enhances the antibacterial activity of XT3. Has hemolytic activity against human red blood cells. This chain is Antimicrobial peptide 1, found in Xenopus tropicalis (Western clawed frog).